A 246-amino-acid polypeptide reads, in one-letter code: Ureidoacrylate amidohydrolase RutB (246 aa).

The interval 1-27 (MSAVTAAGYQAPQERSQSVTLPARPEP) is disordered. Asp41 (proton acceptor) is an active-site residue. Lys150 is a catalytic residue. Catalysis depends on Cys183, which acts as the Nucleophile.

This sequence belongs to the isochorismatase family. RutB subfamily.

The enzyme catalyses (Z)-3-ureidoacrylate + H2O + H(+) = (Z)-3-aminoacrylate + NH4(+) + CO2. It catalyses the reaction (Z)-3-ureidoacrylate + H2O = (Z)-3-aminoacrylate + carbamate + H(+). The catalysed reaction is (Z)-2-methylureidoacrylate + H2O + H(+) = (Z)-2-methylaminoacrylate + NH4(+) + CO2. Hydrolyzes ureidoacrylate to form aminoacrylate and carbamate. The carbamate hydrolyzes spontaneously, thereby releasing one of the nitrogen atoms of the pyrimidine ring as ammonia and one of its carbon atoms as CO2. In Rhizobium rhizogenes (strain K84 / ATCC BAA-868) (Agrobacterium radiobacter), this protein is Ureidoacrylate amidohydrolase RutB.